A 354-amino-acid polypeptide reads, in one-letter code: MGTKGLPLYPDPCRAPGTKTQNTLASDSLAREGPSSNSSFHSSEEEGTDLEGDMLDCSGSRPLLESEEEDENCRPLQEKLGEAALFSESGVCTEPEERGQGGKKSQFLPINQRASDDLGEPDVFATAPFRSSLVPADDVDIFSKAPFVSKGSVAPSQMDEVDVFSRAPFTKKRSMEEFLAVQGSSQDLPMQANLSQSNEGPLLAGRDRAIYTPAQAQYPMTGFAPQAGLPSHSVQVADHFDGNSPRGSPMSSGGHPVDRNRGLQPQKEAFSGPAAGKPFHPQALSKYSRHYSPEDELSAEAQPIAAYKIVSQSNKQLLAGSVSVTSLSSRTTELATADPFALAPFPSKAGKQKP.

Disordered regions lie at residues 1 to 74 (MGTK…ENCR) and 87 to 115 (SESG…QRAS). The residue at position 19 (Lys19) is an N6-acetyllysine. Residues 32–41 (EGPSSNSSFH) show a composition bias toward low complexity. The span at 45 to 54 (EEGTDLEGDM) shows a compositional bias: acidic residues. 2 positions are modified to phosphoserine: Ser115 and Ser174. The span at 182–199 (QGSSQDLPMQANLSQSNE) shows a compositional bias: polar residues. 2 disordered regions span residues 182 to 208 (QGSS…GRDR) and 235 to 298 (QVAD…DELS). A Phosphotyrosine modification is found at Tyr291. Ser292 is subject to Phosphoserine.

This is an uncharacterized protein from Mus musculus (Mouse).